A 486-amino-acid chain; its full sequence is Stretch-activated cation channel yam8 (486 aa).

The first 24 residues, 1-24, serve as a signal peptide directing secretion; sequence MFFFSTHLILKILFFWSITRNIFG. At 25-464 the chain is on the extracellular side; it reads ATYTSLLLNN…PGVEFYESGS (440 aa). Asn33, Asn49, Asn59, Asn82, and Asn93 each carry an N-linked (GlcNAc...) asparagine glycan. Residues 465-485 traverse the membrane as a helical segment; the sequence is ALLNISWRTFFISLIFWILFV. Glu486 is a topological domain (cytoplasmic).

It localises to the cell membrane. In terms of biological role, calcium-permeable, cation-selective stretch-activated channel (SAC) that functions together with CCH1 to mediate calcium entry into cells. Required during mating. The sequence is that of Stretch-activated cation channel yam8 from Schizosaccharomyces pombe (strain 972 / ATCC 24843) (Fission yeast).